A 438-amino-acid chain; its full sequence is MDGVSNWPAPSTPTPVHATLTIPGSKSQTNRALVLAALATPQGTSTISGALRSRDTDLMIGALQTLGFDVESAGTDSDLRVGGGLGPAAGARVDCGLAGTVLRFLPPVAALSTETVEFDGDEQARARPIAPLLAGLQALGVRIDGDGLPFRVRGEGSVAGGTVEIDASASSQFVSGLMLSGALFRDGLTIVHTGESVPSAPHVAMTVSMLRDAGVEVDDTKTNRWTVRPGPVAARHWTIEPDLSNAVPFLSAGVVSGGAVRITGWPAVSTQPAGAIMAILEKVGAVVRQTESYLEVQGTRQYQGFDVDLHDVGELTPAVAALAAVATPGAVSRLRGVAHLRGHETDRLAALSAEINGLGGQCEETDDGLVITAAPLHGGVWHSYADHRMAMAGAIVGLRTPGVEIEDIATTAKTLPEFPQMWADMLAGQTATDPEAGA.

Lys26, Ser27, and Arg31 together coordinate 3-phosphoshikimate. Lys26 contributes to the phosphoenolpyruvate binding site. The phosphoenolpyruvate site is built by Gly99 and Arg127. Residues Ser170, Ser171, Gln172, Ser199, Glu314, and His343 each contribute to the 3-phosphoshikimate site. Gln172 lines the phosphoenolpyruvate pocket. Glu314 functions as the Proton acceptor in the catalytic mechanism. Positions 347, 388, and 413 each coordinate phosphoenolpyruvate.

It belongs to the EPSP synthase family. Monomer.

Its subcellular location is the cytoplasm. It catalyses the reaction 3-phosphoshikimate + phosphoenolpyruvate = 5-O-(1-carboxyvinyl)-3-phosphoshikimate + phosphate. Its pathway is metabolic intermediate biosynthesis; chorismate biosynthesis; chorismate from D-erythrose 4-phosphate and phosphoenolpyruvate: step 6/7. Its function is as follows. Catalyzes the transfer of the enolpyruvyl moiety of phosphoenolpyruvate (PEP) to the 5-hydroxyl of shikimate-3-phosphate (S3P) to produce enolpyruvyl shikimate-3-phosphate and inorganic phosphate. The sequence is that of 3-phosphoshikimate 1-carboxyvinyltransferase from Mycobacterium sp. (strain MCS).